The following is a 359-amino-acid chain: MSKVCIIGTTTWGITLGTIIAHKGREVMLWARTEDEAMLLSTQRRPADFLPENYHFPEFMNVTACLEEAVAGADMVLLAVPSQRMRPNIRLVAPLLTKSMLICSAAKGLEIGTAKRMSQVITDEISPDFAKNICVLSGPNLAMEILKGLPAVTVLAADTEKTAKKAAKLITAANFSAYTNTDIIGVELGGSLKNIIALGAGIVDGLNLGNNAKSALITRGLTEISALGAALGANPLTLSGLAGLGDLIATCSSNLSRNHFVGVELTKGRSLNDIMYNMSNVAEGVSTTAVAYEMARSMDLEMPVTENIYNVLYNNADPKEAARILMDAQATHELAGRKWNLFKMFRKRKARKTPELNPD.

NADPH is bound by residues Thr11, Trp12, Arg32, and Lys107. Residues Lys107 and Gly138 each contribute to the sn-glycerol 3-phosphate site. NADPH is bound at residue Ala142. Sn-glycerol 3-phosphate contacts are provided by Lys193, Asp246, Ser256, Arg257, and Asn258. Lys193 acts as the Proton acceptor in catalysis. Arg257 is a binding site for NADPH. Residues Val281 and Glu283 each contribute to the NADPH site.

This sequence belongs to the NAD-dependent glycerol-3-phosphate dehydrogenase family.

The protein resides in the cytoplasm. It catalyses the reaction sn-glycerol 3-phosphate + NAD(+) = dihydroxyacetone phosphate + NADH + H(+). The enzyme catalyses sn-glycerol 3-phosphate + NADP(+) = dihydroxyacetone phosphate + NADPH + H(+). It functions in the pathway membrane lipid metabolism; glycerophospholipid metabolism. Functionally, catalyzes the reduction of the glycolytic intermediate dihydroxyacetone phosphate (DHAP) to sn-glycerol 3-phosphate (G3P), the key precursor for phospholipid synthesis. The protein is Glycerol-3-phosphate dehydrogenase [NAD(P)+] of Dehalococcoides mccartyi (strain CBDB1).